Consider the following 255-residue polypeptide: Triosephosphate isomerase (255 aa).

Asn9–Lys11 is a binding site for substrate. The active-site Electrophile is His100. Glu169 serves as the catalytic Proton acceptor. Substrate-binding positions include Gly175, Ser208, and Gly229 to Gly230.

The protein belongs to the triosephosphate isomerase family. As to quaternary structure, homodimer.

The protein localises to the cytoplasm. The catalysed reaction is D-glyceraldehyde 3-phosphate = dihydroxyacetone phosphate. Its pathway is carbohydrate biosynthesis; gluconeogenesis. It participates in carbohydrate degradation; glycolysis; D-glyceraldehyde 3-phosphate from glycerone phosphate: step 1/1. Involved in the gluconeogenesis. Catalyzes stereospecifically the conversion of dihydroxyacetone phosphate (DHAP) to D-glyceraldehyde-3-phosphate (G3P). This Synechococcus sp. (strain JA-3-3Ab) (Cyanobacteria bacterium Yellowstone A-Prime) protein is Triosephosphate isomerase.